A 325-amino-acid polypeptide reads, in one-letter code: Acetyl-coenzyme A carboxylase carboxyl transferase subunit beta (325 aa).

Residues 24–293 form the CoA carboxyltransferase N-terminal domain; sequence LWIKCPDSGH…AEIEVVTPEP (270 aa).

The protein belongs to the AccD/PCCB family. As to quaternary structure, acetyl-CoA carboxylase is a heterohexamer composed of biotin carboxyl carrier protein (AccB), biotin carboxylase (AccC) and two subunits each of ACCase subunit alpha (AccA) and ACCase subunit beta (AccD).

The protein localises to the cytoplasm. The catalysed reaction is N(6)-carboxybiotinyl-L-lysyl-[protein] + acetyl-CoA = N(6)-biotinyl-L-lysyl-[protein] + malonyl-CoA. It functions in the pathway lipid metabolism; malonyl-CoA biosynthesis; malonyl-CoA from acetyl-CoA: step 1/1. Component of the acetyl coenzyme A carboxylase (ACC) complex. Biotin carboxylase (BC) catalyzes the carboxylation of biotin on its carrier protein (BCCP) and then the CO(2) group is transferred by the transcarboxylase to acetyl-CoA to form malonyl-CoA. The polypeptide is Acetyl-coenzyme A carboxylase carboxyl transferase subunit beta (Rhodopseudomonas palustris (strain BisA53)).